The chain runs to 204 residues: Signal peptidase I (204 aa).

The Cytoplasmic segment spans residues M1 to E10. A helical transmembrane segment spans residues W11 to S30. Over N31 to F204 the chain is Extracellular. Catalysis depends on residues S38 and K76.

It belongs to the peptidase S26 family.

It is found in the cell membrane. It catalyses the reaction Cleavage of hydrophobic, N-terminal signal or leader sequences from secreted and periplasmic proteins.. The polypeptide is Signal peptidase I (lepB) (Streptococcus pneumoniae serotype 4 (strain ATCC BAA-334 / TIGR4)).